The sequence spans 143 residues: Ribonuclease H (143 aa).

Residues 1 to 140 enclose the RNase H type-1 domain; sequence MKVEIYTDGA…VDALANLGIE (140 aa). Residues Asp-8, Glu-46, Asp-68, and Asp-132 each coordinate Mg(2+).

Belongs to the RNase H family. In terms of assembly, monomer. Mg(2+) serves as cofactor.

It is found in the cytoplasm. It carries out the reaction Endonucleolytic cleavage to 5'-phosphomonoester.. In terms of biological role, endonuclease that specifically degrades the RNA of RNA-DNA hybrids. In Legionella pneumophila (strain Lens), this protein is Ribonuclease H.